The primary structure comprises 397 residues: Tryptophan synthase beta chain (397 aa).

The residue at position 91 (K91) is an N6-(pyridoxal phosphate)lysine.

It belongs to the TrpB family. As to quaternary structure, tetramer of two alpha and two beta chains. It depends on pyridoxal 5'-phosphate as a cofactor.

It carries out the reaction (1S,2R)-1-C-(indol-3-yl)glycerol 3-phosphate + L-serine = D-glyceraldehyde 3-phosphate + L-tryptophan + H2O. Its pathway is amino-acid biosynthesis; L-tryptophan biosynthesis; L-tryptophan from chorismate: step 5/5. In terms of biological role, the beta subunit is responsible for the synthesis of L-tryptophan from indole and L-serine. The chain is Tryptophan synthase beta chain from Bacillus anthracis (strain A0248).